The following is a 216-amino-acid chain: Nucleolar protein 12 (216 aa).

The stretch at 33-97 (GFHKRKVERK…LVTAKTESVQ (65 aa)) forms a coiled coil. The interval 120–216 (LLGLPLPEQG…MTGKARHNGE (97 aa)) is disordered. A compositionally biased stretch (acidic residues) spans 129 to 140 (GDQDGSQEEEVS). 2 stretches are compositionally biased toward basic residues: residues 171 to 183 (AHSR…KHPR) and 200 to 216 (KTQR…HNGE).

This sequence belongs to the RRP17 family. Interacts with KIAA1191.

The protein resides in the nucleus. It is found in the nucleolus. The protein localises to the cytoplasm. Multifunctional RNA binding protein that plays a role in RNA metabolism and DNA maintenance. Participates in the resolution of DNA stress and the maintenance of genome integrity by localizing to sites of DNA insults. Also plays a role in proper nucleolar organization by limiting nucleolar size and regulating nucleolar number. Mechanistically, regulates the nucleolar levels of fibrillarin and nucleolin, two key players in pre-rRNA processing and ribosome assembly. The chain is Nucleolar protein 12 (Nol12) from Rattus norvegicus (Rat).